Reading from the N-terminus, the 187-residue chain is Elongation factor P (187 aa).

The protein belongs to the elongation factor P family.

Its subcellular location is the cytoplasm. It participates in protein biosynthesis; polypeptide chain elongation. Involved in peptide bond synthesis. Stimulates efficient translation and peptide-bond synthesis on native or reconstituted 70S ribosomes in vitro. Probably functions indirectly by altering the affinity of the ribosome for aminoacyl-tRNA, thus increasing their reactivity as acceptors for peptidyl transferase. The polypeptide is Elongation factor P (Clavibacter michiganensis subsp. michiganensis (strain NCPPB 382)).